Here is a 201-residue protein sequence, read N- to C-terminus: L(+)-tartrate dehydratase subunit beta (201 aa).

Residue His-37 is part of the active site.

Belongs to the class-I fumarase family. As to quaternary structure, heterotetramer of two alpha and two beta subunits.

It catalyses the reaction (2R,3R)-tartrate = oxaloacetate + H2O. The sequence is that of L(+)-tartrate dehydratase subunit beta (ttdB) from Shigella boydii serotype 4 (strain Sb227).